The sequence spans 1020 residues: FERM domain-containing protein 4A (1020 aa).

The region spanning 5–307 (RRCQVHLLDD…SQHQFYLDRK (303 aa)) is the FERM domain. The tract at residues 343–405 (KGKIISGSSG…RLCLREAELT (63 aa)) is necessary for interaction with CYTH1. Low complexity predominate over residues 351–367 (SGSLLSSGSQESDSSQS). The disordered stretch occupies residues 351-371 (SGSLLSSGSQESDSSQSAKKD). Residues 367-401 (SAKKDMLAALKSRQEALEETLRQRLEELKRLCLRE) adopt a coiled-coil conformation. Ser-515 carries the post-translational modification Phosphoserine. The segment at 538–665 (DEDSQVTSTI…MPSTPDLRVR (128 aa)) is disordered. Polar residues predominate over residues 542–551 (QVTSTISPLQ). The segment covering 556–572 (GLPPRPPSSHNRPPPPQ) has biased composition (pro residues). Residues 565–920 (HNRPPPPQSL…QWYQRSTASH (356 aa)) are necessary for tight junction and adherens junction localization; Requires for interaction with PARD3. A phosphoserine mark is found at Ser-590 and Ser-601. Residues 609–624 (VKKRSSHGHSSSHKRF) are compositionally biased toward basic residues. Polar residues predominate over residues 626–658 (STGSCTEAGVSSSLQNSPIRSLPHWNSQSSMPS). Ser-666 and Ser-696 each carry phosphoserine. Disordered stretches follow at residues 698-741 (ESQG…HSSS) and 757-810 (AEDS…QSQP). The segment covering 773-796 (RAAGALGSASSGSMPNLAARSGAA) has biased composition (low complexity). 3 positions are modified to phosphoserine: Ser-785, Ser-854, and Ser-882. Disordered regions lie at residues 862 to 949 (KESW…STFV) and 961 to 1020 (CKAT…STDE). Positions 893 to 910 (DGAHDKGSGRAAVSDELR) are enriched in basic and acidic residues. The span at 927–947 (SHTSSTSSDSGSQYSTSSQST) shows a compositional bias: low complexity. 3 stretches are compositionally biased toward polar residues: residues 967–981 (ALPQ…SSEI), 994–1004 (TWQTGEATENS), and 1011–1020 (ESPTHQSTDE).

As to quaternary structure, interacts (via coiled-coil domain) with CYTH1 (via coiled-coil domain). Interacts with PARD3 (via coiled-coil domain). Found in a complex with PARD3, CYTH1 and FRMD4A. Interacts with CYTH2. Interacts with CYTH3.

It localises to the cytoplasm. The protein resides in the cytoskeleton. The protein localises to the cell junction. It is found in the adherens junction. Its subcellular location is the tight junction. Scaffolding protein that regulates epithelial cell polarity by connecting ARF6 activation with the PAR3 complex. Plays a redundant role with FRMD4B in epithelial polarization. May regulate MAPT secretion by activating ARF6-signaling. This is FERM domain-containing protein 4A (Frmd4a) from Mus musculus (Mouse).